The chain runs to 165 residues: uncharacterized protein (165 aa).

Residues 16-36 (ASISSILNFFFFYIMEYFVAV) traverse the membrane as a helical segment.

Belongs to the asfivirus F165R family.

Its subcellular location is the host membrane. This is an uncharacterized protein from Ornithodoros (relapsing fever ticks).